Reading from the N-terminus, the 449-residue chain is UDP-N-acetylglucosamine 1-carboxyvinyltransferase (449 aa).

Residue 51-52 coordinates phosphoenolpyruvate; that stretch reads KN. Arg-121 serves as a coordination point for UDP-N-acetyl-alpha-D-glucosamine. Catalysis depends on Cys-145, which acts as the Proton donor. 2-(S-cysteinyl)pyruvic acid O-phosphothioketal is present on Cys-145. UDP-N-acetyl-alpha-D-glucosamine-binding positions include 150 to 154, Asp-333, and Ile-355; that span reads RPVDQ.

Belongs to the EPSP synthase family. MurA subfamily.

Its subcellular location is the cytoplasm. It catalyses the reaction phosphoenolpyruvate + UDP-N-acetyl-alpha-D-glucosamine = UDP-N-acetyl-3-O-(1-carboxyvinyl)-alpha-D-glucosamine + phosphate. It participates in cell wall biogenesis; peptidoglycan biosynthesis. Its function is as follows. Cell wall formation. Adds enolpyruvyl to UDP-N-acetylglucosamine. This chain is UDP-N-acetylglucosamine 1-carboxyvinyltransferase, found in Burkholderia lata (strain ATCC 17760 / DSM 23089 / LMG 22485 / NCIMB 9086 / R18194 / 383).